Reading from the N-terminus, the 629-residue chain is tRNA uridine 5-carboxymethylaminomethyl modification enzyme MnmG (629 aa).

FAD is bound at residue 13–18 (GGGHAG). 273–287 (GPRYCPSIEDKIHRF) is an NAD(+) binding site.

The protein belongs to the MnmG family. As to quaternary structure, homodimer. Heterotetramer of two MnmE and two MnmG subunits. FAD is required as a cofactor.

The protein resides in the cytoplasm. Its function is as follows. NAD-binding protein involved in the addition of a carboxymethylaminomethyl (cmnm) group at the wobble position (U34) of certain tRNAs, forming tRNA-cmnm(5)s(2)U34. The sequence is that of tRNA uridine 5-carboxymethylaminomethyl modification enzyme MnmG from Shewanella baltica (strain OS185).